A 549-amino-acid polypeptide reads, in one-letter code: CTP synthase (549 aa).

Residues 1–272 (MPPKSSTTKH…DAYVVRRMDL (272 aa)) are amidoligase domain. Serine 19 contributes to the CTP binding site. Serine 19 serves as a coordination point for UTP. Residues 20–25 (SLGKGL) and aspartate 77 contribute to the ATP site. 2 residues coordinate Mg(2+): aspartate 77 and glutamate 146. CTP-binding positions include 153-155 (DIE), 193-198 (KTKPTQ), and lysine 229. UTP contacts are provided by residues 193–198 (KTKPTQ) and lysine 229. Positions 301–548 (VGKYIDLPDA…VKAAVERKTS (248 aa)) constitute a Glutamine amidotransferase type-1 domain. Glycine 360 is a binding site for L-glutamine. Residue cysteine 387 is the Nucleophile; for glutamine hydrolysis of the active site. L-glutamine is bound by residues 388-391 (LGLQ), glutamate 411, and arginine 473. Catalysis depends on residues histidine 521 and glutamate 523.

Belongs to the CTP synthase family. As to quaternary structure, homotetramer.

It catalyses the reaction UTP + L-glutamine + ATP + H2O = CTP + L-glutamate + ADP + phosphate + 2 H(+). It carries out the reaction L-glutamine + H2O = L-glutamate + NH4(+). The enzyme catalyses UTP + NH4(+) + ATP = CTP + ADP + phosphate + 2 H(+). It functions in the pathway pyrimidine metabolism; CTP biosynthesis via de novo pathway; CTP from UDP: step 2/2. With respect to regulation, allosterically activated by GTP, when glutamine is the substrate; GTP has no effect on the reaction when ammonia is the substrate. The allosteric effector GTP functions by stabilizing the protein conformation that binds the tetrahedral intermediate(s) formed during glutamine hydrolysis. Inhibited by the product CTP, via allosteric rather than competitive inhibition. In terms of biological role, catalyzes the ATP-dependent amination of UTP to CTP with either L-glutamine or ammonia as the source of nitrogen. Regulates intracellular CTP levels through interactions with the four ribonucleotide triphosphates. This chain is CTP synthase, found in Streptomyces coelicolor (strain ATCC BAA-471 / A3(2) / M145).